Reading from the N-terminus, the 126-residue chain is Bleomycin resistance protein (126 aa).

The VOC domain maps to Met1–Asn119.

It belongs to the bleomycin resistance protein family.

Functionally, binding protein with a strong affinity to the bleomycin family of antibiotics. Binds to CL990; an antimitotic-antibiotic compound. This Klebsiella pneumoniae protein is Bleomycin resistance protein (ble).